Reading from the N-terminus, the 839-residue chain is Probable beta-glucosidase I (839 aa).

An N-linked (GlcNAc...) asparagine glycan is attached at Asn197. Asp225 is a catalytic residue. The PA14 domain maps to 395-555 (DGKKGFSFRV…SQEELIAKAA (161 aa)).

It belongs to the glycosyl hydrolase 3 family.

The protein localises to the secreted. It catalyses the reaction Hydrolysis of terminal, non-reducing beta-D-glucosyl residues with release of beta-D-glucose.. The protein operates within glycan metabolism; cellulose degradation. Beta-glucosidases are one of a number of cellulolytic enzymes involved in the degradation of cellulosic biomass. Catalyzes the last step releasing glucose from the inhibitory cellobiose. The sequence is that of Probable beta-glucosidase I (bglI) from Aspergillus terreus (strain NIH 2624 / FGSC A1156).